Here is a 938-residue protein sequence, read N- to C-terminus: Isoleucine--tRNA ligase (938 aa).

The 'HIGH' region motif lies at 58–68; the sequence is PYANGSIHIGH. Glutamate 561 provides a ligand contact to L-isoleucyl-5'-AMP. The short motif at 602–606 is the 'KMSKS' region element; the sequence is KMSKS. Lysine 605 provides a ligand contact to ATP. Zn(2+)-binding residues include cysteine 901, cysteine 904, cysteine 921, and cysteine 924.

This sequence belongs to the class-I aminoacyl-tRNA synthetase family. IleS type 1 subfamily. As to quaternary structure, monomer. Zn(2+) is required as a cofactor.

Its subcellular location is the cytoplasm. It carries out the reaction tRNA(Ile) + L-isoleucine + ATP = L-isoleucyl-tRNA(Ile) + AMP + diphosphate. Catalyzes the attachment of isoleucine to tRNA(Ile). As IleRS can inadvertently accommodate and process structurally similar amino acids such as valine, to avoid such errors it has two additional distinct tRNA(Ile)-dependent editing activities. One activity is designated as 'pretransfer' editing and involves the hydrolysis of activated Val-AMP. The other activity is designated 'posttransfer' editing and involves deacylation of mischarged Val-tRNA(Ile). The protein is Isoleucine--tRNA ligase of Klebsiella pneumoniae (strain 342).